The primary structure comprises 323 residues: GDSL esterase/lipase At5g03980 (323 aa).

The first 21 residues, 1-21, serve as a signal peptide directing secretion; the sequence is MSTTKALSLLVFILFVSLVHS. Residue Ser36 is the Nucleophile of the active site. Asn77 carries N-linked (GlcNAc...) asparagine glycosylation. Residues Asp294 and His297 contribute to the active site.

It belongs to the 'GDSL' lipolytic enzyme family.

Its subcellular location is the secreted. The sequence is that of GDSL esterase/lipase At5g03980 from Arabidopsis thaliana (Mouse-ear cress).